The sequence spans 503 residues: Type II secretion system ATPase E (503 aa).

4 residues coordinate Zn(2+): Cys397, Cys400, Cys430, and Cys433.

Belongs to the GSP E family. As to quaternary structure, forms homooligomers; most probably hexamers. Interacts with EpsL/GspL. The cofactor is Zn(2+).

Its subcellular location is the cell inner membrane. The catalysed reaction is ATP + H2O + cellular proteinSide 1 = ADP + phosphate + cellular proteinSide 2.. Its function is as follows. ATPase component of the type II secretion system required for the energy-dependent secretion of extracellular factors such as proteases and toxins from the periplasm. Acts as a molecular motor to provide the energy that is required for assembly of the pseudopilus and the extrusion of substrates generated in the cytoplasm. The polypeptide is Type II secretion system ATPase E (epsE) (Vibrio cholerae serotype O1 (strain ATCC 39315 / El Tor Inaba N16961)).